Here is a 254-residue protein sequence, read N- to C-terminus: Pyrroloquinoline-quinone synthase (254 aa).

The protein belongs to the PqqC family.

The catalysed reaction is 6-(2-amino-2-carboxyethyl)-7,8-dioxo-1,2,3,4,7,8-hexahydroquinoline-2,4-dicarboxylate + 3 O2 = pyrroloquinoline quinone + 2 H2O2 + 2 H2O + H(+). Its pathway is cofactor biosynthesis; pyrroloquinoline quinone biosynthesis. Ring cyclization and eight-electron oxidation of 3a-(2-amino-2-carboxyethyl)-4,5-dioxo-4,5,6,7,8,9-hexahydroquinoline-7,9-dicarboxylic-acid to PQQ. The polypeptide is Pyrroloquinoline-quinone synthase (Rhodopseudomonas palustris (strain ATCC BAA-98 / CGA009)).